The sequence spans 314 residues: MPATRPVLLIGGPTAGGKSALALDLAGRLSGTVVNADSMQLYDGLRVLTARPSVAEEARVPHRLYGIVPPSERMSAARWRDLALAEIAAAHDAGRVPVVVGGTGLYLRALAEGLADIPPVPEPVRAEAQALHRALGTPALHARLAAEDPDGAARLHPGDTTRVLRAWEVLRATGRPLGYWQTAGRAAPPPGLRFLTLVCEPPRDRLYAACDARFLRMLEAGALEEVRRLAALGLDPGLPAMKALGVPELLAHLRGDLPLEAATATAQQATRNYAKRQLTWFRHQIAAARRFDPGDCVERNAVMKFCVDNVTQIS.

12–19 (GPTAGGKS) is a binding site for ATP. 14–19 (TAGGKS) provides a ligand contact to substrate. The interaction with substrate tRNA stretch occupies residues 37–40 (DSMQ).

This sequence belongs to the IPP transferase family. Monomer. Mg(2+) is required as a cofactor.

The catalysed reaction is adenosine(37) in tRNA + dimethylallyl diphosphate = N(6)-dimethylallyladenosine(37) in tRNA + diphosphate. Catalyzes the transfer of a dimethylallyl group onto the adenine at position 37 in tRNAs that read codons beginning with uridine, leading to the formation of N6-(dimethylallyl)adenosine (i(6)A). The chain is tRNA dimethylallyltransferase from Rhodospirillum centenum (strain ATCC 51521 / SW).